The following is a 531-amino-acid chain: Keratin, type II cytoskeletal 79 (531 aa).

Over residues 1–12 (MRSSLSRQTFST) the composition is skewed to polar residues. The interval 1–55 (MRSSLSRQTFSTKGGFSSNSASGGGGSRMRTSYSSVTMSRGSGGGGGVRSGSSSG) is disordered. Residues 1–138 (MRSSLSRQTF…DPEIQRVRTQ (138 aa)) are head. Over residues 28–40 (RMRTSYSSVTMSR) the composition is skewed to low complexity. Residues 41–55 (GSGGGGGVRSGSSSG) are compositionally biased toward gly residues. Residues 139–174 (EREQIKTLNNKFASFIDKVRFLEQQNKVLETKWALL) are coil 1A. Positions 139-453 (EREQIKTLNN…KLLESEESRM (315 aa)) constitute an IF rod domain. The tract at residues 175-194 (QEQSQNTGVARSLEPFFENY) is linker 1. The coil 1B stretch occupies residues 195-286 (LSTLRRQLDT…QLFEMELSQV (92 aa)). Positions 287 to 310 (QTNVSDTNVILSMDNNRNLDLDSI) are linker 12. The segment at 311 to 449 (IAEVKAQYEL…ATYRKLLESE (139 aa)) is coil 2. The interval 450 to 531 (ESRMSGDCPS…TTVKTSSRRY (82 aa)) is tail.

It belongs to the intermediate filament family. In terms of assembly, heterotetramer of two type I and two type II keratins.

This Mus musculus (Mouse) protein is Keratin, type II cytoskeletal 79 (Krt79).